The primary structure comprises 97 residues: Large ribosomal subunit protein bL25 (97 aa).

The protein belongs to the bacterial ribosomal protein bL25 family. Part of the 50S ribosomal subunit; part of the 5S rRNA/L5/L18/L25 subcomplex. Contacts the 5S rRNA. Binds to the 5S rRNA independently of L5 and L18.

This is one of the proteins that binds to the 5S RNA in the ribosome where it forms part of the central protuberance. This is Large ribosomal subunit protein bL25 from Blochmanniella pennsylvanica (strain BPEN).